The following is a 386-amino-acid chain: Phosphoglycerate kinase (386 aa).

Residues 21–23 (DLN), Arg-36, 59–62 (HLGR), Arg-113, and Arg-146 contribute to the substrate site. Residues Lys-197, Glu-314, and 340–343 (GGDT) each bind ATP.

It belongs to the phosphoglycerate kinase family. In terms of assembly, monomer.

It is found in the cytoplasm. It catalyses the reaction (2R)-3-phosphoglycerate + ATP = (2R)-3-phospho-glyceroyl phosphate + ADP. The protein operates within carbohydrate degradation; glycolysis; pyruvate from D-glyceraldehyde 3-phosphate: step 2/5. The polypeptide is Phosphoglycerate kinase (Ectopseudomonas mendocina (strain ymp) (Pseudomonas mendocina)).